A 203-amino-acid polypeptide reads, in one-letter code: Protein GrpE (203 aa).

A compositionally biased stretch (basic and acidic residues) spans 1 to 10 (MSNESIKAEQ). Residues 1–20 (MSNESIKAEQDLIQEGVESE) are disordered.

The protein belongs to the GrpE family. Homodimer.

It localises to the cytoplasm. Participates actively in the response to hyperosmotic and heat shock by preventing the aggregation of stress-denatured proteins, in association with DnaK and GrpE. It is the nucleotide exchange factor for DnaK and may function as a thermosensor. Unfolded proteins bind initially to DnaJ; upon interaction with the DnaJ-bound protein, DnaK hydrolyzes its bound ATP, resulting in the formation of a stable complex. GrpE releases ADP from DnaK; ATP binding to DnaK triggers the release of the substrate protein, thus completing the reaction cycle. Several rounds of ATP-dependent interactions between DnaJ, DnaK and GrpE are required for fully efficient folding. This chain is Protein GrpE, found in Shewanella sp. (strain MR-7).